The following is a 188-amino-acid chain: GTP cyclohydrolase 1 (188 aa).

Zn(2+) is bound by residues Cys-73, His-76, and Cys-144.

This sequence belongs to the GTP cyclohydrolase I family. As to quaternary structure, homomer.

The catalysed reaction is GTP + H2O = 7,8-dihydroneopterin 3'-triphosphate + formate + H(+). It participates in cofactor biosynthesis; 7,8-dihydroneopterin triphosphate biosynthesis; 7,8-dihydroneopterin triphosphate from GTP: step 1/1. The protein is GTP cyclohydrolase 1 of Caldivirga maquilingensis (strain ATCC 700844 / DSM 13496 / JCM 10307 / IC-167).